We begin with the raw amino-acid sequence, 756 residues long: MSFVAGVIRRLDETVVNRIAAGEVIQRPANAIKEMIENCLDAKSTSIQVIVKEGGLKLIQIQDNGTGIRKEDLDIVCERFTTSKLQSFEDLASISTYGFRGEALASISHVAHVTITTKTADGKCAYRASYSDGKLKAPPKPCAGNQGTQITVEDLFYNIATRRKALKNPSEEYGKILEVVGRYSVHNAGISFSVKKQGETVADVRTLPNASTVDNIRSIFGNAVSRELIEIGCEDKTLAFKMNGYISNANYSVKKCIFLLFINHRLVESTSLRKAIETVYAAYLPKNTHPFLYLSLEISPQNVDVNVHPTKHEVHFLHEESILERVQQHIESKLLGSNSSRMYFTQTLLPGLAGPSGEMVKSTTSLTSSSTSGSSDKVYAHQMVRTDSREQKLDAFLQPLSKPLSSQPQAIVTEDKTDISSGRARQQDEEMLELPAPAEVAAKNQSLEGDTTKGTSEMSEKRGPTSSNPRKRHREDSDVEMVEDDSRKEMTAACTPRRRIINLTSVLSLQEEINEQGHEVLREMLHNHSFVGCVNPQWALAQHQTKLYLLNTTKLSEELFYQILIYDFANFGVLRLSEPAPLFDLAMLALDSPESGWTEEDGPKEGLAEYIVEFLKKKAEMLADYFSLEIDEEGNLIGLPLLIDNYVPPLEGLPIFILRLATEVNWDEEKECFESLSKECAMFYSIRKQYISEESTLSGQQSEVPGSIPNSWKWTVEHIVYKALRSHILPPKHFTEDGNILQLANLPDLYKVFERC.

S2 is subject to N-acetylserine. K33 carries the post-translational modification N6-acetyllysine. ATP-binding positions include N38, D63, 82-84, and 100-104; these read TSK and RGEAL. An N6-acetyllysine mark is found at K241 and K361. 2 disordered regions span residues 355-378 and 400-491; these read PSGE…SDKV and LSKP…KEMT. Over residues 362 to 375 the composition is skewed to low complexity; that stretch reads STTSLTSSSTSGSS. K377 carries the post-translational modification N6-acetyllysine. The tract at residues 410 to 650 is interaction with EXO1; the sequence is AIVTEDKTDI…LLIDNYVPPL (241 aa). The segment covering 443–457 has biased composition (polar residues); the sequence is KNQSLEGDTTKGTSE. Residues 471–474 carry the Nuclear localization signal motif; sequence KRHR. S477 is subject to Phosphoserine.

It belongs to the DNA mismatch repair MutL/HexB family. In terms of assembly, component of the DNA mismatch repair (MMR) complex composed at least of MSH2, MSH3, MSH6, PMS1 and MLH1. Heterodimer of MLH1 and PMS2 (MutL alpha), MLH1 and PMS1 (MutL beta) or MLH1 and MLH3 (MutL gamma). Forms a ternary complex with MutS alpha (MSH2-MSH6) or MutS beta (MSH2-MSH3). Part of the BRCA1-associated genome surveillance complex (BASC), which contains BRCA1, MSH2, MSH6, MLH1, ATM, BLM, PMS2 and the RAD50-MRE11-NBS1 protein complex. This association could be a dynamic process changing throughout the cell cycle and within subnuclear domains. Interacts with MCM9; the interaction recruits MLH1 to chromatin. Interacts with MCM8. Interacts with PMS2; this interaction promotes MLH1 stability. Interacts with MBD4. Interacts with EXO1. Interacts with MTMR15/FAN1. In terms of processing, acetylated. Deacetylated by HDAC6 which prevents the MutL alpha complex, formed by the MLH1-PMS2 heterodimer, from being recruited to the MutS alpha complex, formed by the MSH2-MSH6 heterodimer, leading to tolerance of DNA damage. Ubiquitinated by UBR4; leading to proteasomal degradation. This ubiquitination is counteracted by the deubiquitinase USP5. In terms of tissue distribution, colon, lymphocytes, breast, lung, spleen, testis, prostate, thyroid, gall bladder and heart.

It localises to the nucleus. Its subcellular location is the chromosome. Functionally, heterodimerizes with PMS2 to form MutL alpha, a component of the post-replicative DNA mismatch repair system (MMR). DNA repair is initiated by MutS alpha (MSH2-MSH6) or MutS beta (MSH2-MSH3) binding to a dsDNA mismatch, then MutL alpha is recruited to the heteroduplex. Assembly of the MutL-MutS-heteroduplex ternary complex in presence of RFC and PCNA is sufficient to activate endonuclease activity of PMS2. It introduces single-strand breaks near the mismatch and thus generates new entry points for the exonuclease EXO1 to degrade the strand containing the mismatch. DNA methylation would prevent cleavage and therefore assure that only the newly mutated DNA strand is going to be corrected. MutL alpha (MLH1-PMS2) interacts physically with the clamp loader subunits of DNA polymerase III, suggesting that it may play a role to recruit the DNA polymerase III to the site of the MMR. Also implicated in DNA damage signaling, a process which induces cell cycle arrest and can lead to apoptosis in case of major DNA damages. Heterodimerizes with MLH3 to form MutL gamma which plays a role in meiosis. The chain is DNA mismatch repair protein Mlh1 (MLH1) from Homo sapiens (Human).